We begin with the raw amino-acid sequence, 101 residues long: NAD(P)H-quinone oxidoreductase subunit 4L, chloroplastic (101 aa).

The next 3 helical transmembrane spans lie at 2–22 (MLEH…YGLI), 32–52 (MCLE…SDLF), and 61–81 (IFSI…LAII).

This sequence belongs to the complex I subunit 4L family. NDH is composed of at least 16 different subunits, 5 of which are encoded in the nucleus.

The protein resides in the plastid. It is found in the chloroplast thylakoid membrane. The enzyme catalyses a plastoquinone + NADH + (n+1) H(+)(in) = a plastoquinol + NAD(+) + n H(+)(out). It catalyses the reaction a plastoquinone + NADPH + (n+1) H(+)(in) = a plastoquinol + NADP(+) + n H(+)(out). Functionally, NDH shuttles electrons from NAD(P)H:plastoquinone, via FMN and iron-sulfur (Fe-S) centers, to quinones in the photosynthetic chain and possibly in a chloroplast respiratory chain. The immediate electron acceptor for the enzyme in this species is believed to be plastoquinone. Couples the redox reaction to proton translocation, and thus conserves the redox energy in a proton gradient. The chain is NAD(P)H-quinone oxidoreductase subunit 4L, chloroplastic from Ranunculus macranthus (Large buttercup).